The primary structure comprises 427 residues: Dihydroorotase (427 aa).

Zn(2+) is bound by residues His-60 and His-62. Substrate is bound by residues His-62–Arg-64 and Asn-94. Asp-151, His-178, and His-231 together coordinate Zn(2+). Asn-277 lines the substrate pocket. Residue Asp-304 coordinates Zn(2+). Residue Asp-304 is part of the active site. Substrate contacts are provided by residues His-308 and Phe-322–Gly-323.

Belongs to the metallo-dependent hydrolases superfamily. DHOase family. Class I DHOase subfamily. Zn(2+) serves as cofactor.

It catalyses the reaction (S)-dihydroorotate + H2O = N-carbamoyl-L-aspartate + H(+). Its pathway is pyrimidine metabolism; UMP biosynthesis via de novo pathway; (S)-dihydroorotate from bicarbonate: step 3/3. Its function is as follows. Catalyzes the reversible cyclization of carbamoyl aspartate to dihydroorotate. This chain is Dihydroorotase, found in Pelotomaculum thermopropionicum (strain DSM 13744 / JCM 10971 / SI).